Consider the following 311-residue polypeptide: Salutaridine reductase (311 aa).

Position 17-40 (17-40 (VTGGNKGIGFEICKQLSSSGIMVV)) interacts with NADP(+). Ser180 lines the substrate pocket. The Proton acceptor role is filled by Tyr236.

Belongs to the short-chain dehydrogenases/reductases (SDR) family.

The enzyme catalyses (7S)-salutaridinol + NADP(+) = salutaridine + NADPH + H(+). Its activity is regulated as follows. Subject to substrate inhibition at salutaridine concentrations higher than 20 to 30 uM. In terms of biological role, involved in biosynthesis of morphinan-type benzylisoquinoline alkaloids. Catalyzes the stereospecific conversion of salutaridine to salutaridinol. This chain is Salutaridine reductase, found in Papaver bracteatum (Great scarlet poppy).